We begin with the raw amino-acid sequence, 217 residues long: Phosphatidylserine decarboxylase proenzyme (217 aa).

Ser183 acts as the Schiff-base intermediate with substrate; via pyruvic acid in catalysis. Pyruvic acid (Ser); by autocatalysis is present on Ser183.

The protein belongs to the phosphatidylserine decarboxylase family. PSD-A subfamily. In terms of assembly, heterodimer of a large membrane-associated beta subunit and a small pyruvoyl-containing alpha subunit. The cofactor is pyruvate. Post-translationally, is synthesized initially as an inactive proenzyme. Formation of the active enzyme involves a self-maturation process in which the active site pyruvoyl group is generated from an internal serine residue via an autocatalytic post-translational modification. Two non-identical subunits are generated from the proenzyme in this reaction, and the pyruvate is formed at the N-terminus of the alpha chain, which is derived from the carboxyl end of the proenzyme. The post-translation cleavage follows an unusual pathway, termed non-hydrolytic serinolysis, in which the side chain hydroxyl group of the serine supplies its oxygen atom to form the C-terminus of the beta chain, while the remainder of the serine residue undergoes an oxidative deamination to produce ammonia and the pyruvoyl prosthetic group on the alpha chain.

The protein localises to the cell membrane. The enzyme catalyses a 1,2-diacyl-sn-glycero-3-phospho-L-serine + H(+) = a 1,2-diacyl-sn-glycero-3-phosphoethanolamine + CO2. It participates in phospholipid metabolism; phosphatidylethanolamine biosynthesis; phosphatidylethanolamine from CDP-diacylglycerol: step 2/2. Its function is as follows. Catalyzes the formation of phosphatidylethanolamine (PtdEtn) from phosphatidylserine (PtdSer). This Cupriavidus metallidurans (strain ATCC 43123 / DSM 2839 / NBRC 102507 / CH34) (Ralstonia metallidurans) protein is Phosphatidylserine decarboxylase proenzyme.